A 374-amino-acid polypeptide reads, in one-letter code: Queuine tRNA-ribosyltransferase (374 aa).

Aspartate 89 (proton acceptor) is an active-site residue. Substrate is bound by residues 89 to 93 (DSGGF), aspartate 143, glutamine 187, and glycine 214. An RNA binding region spans residues 245-251 (GVGKPED). The active-site Nucleophile is the aspartate 264. Residues 269-273 (TRNAR) form an RNA binding; important for wobble base 34 recognition region. 4 residues coordinate Zn(2+): cysteine 302, cysteine 304, cysteine 307, and histidine 333.

It belongs to the queuine tRNA-ribosyltransferase family. Homodimer. Within each dimer, one monomer is responsible for RNA recognition and catalysis, while the other monomer binds to the replacement base PreQ1. Zn(2+) serves as cofactor.

It carries out the reaction 7-aminomethyl-7-carbaguanine + guanosine(34) in tRNA = 7-aminomethyl-7-carbaguanosine(34) in tRNA + guanine. It participates in tRNA modification; tRNA-queuosine biosynthesis. Functionally, catalyzes the base-exchange of a guanine (G) residue with the queuine precursor 7-aminomethyl-7-deazaguanine (PreQ1) at position 34 (anticodon wobble position) in tRNAs with GU(N) anticodons (tRNA-Asp, -Asn, -His and -Tyr). Catalysis occurs through a double-displacement mechanism. The nucleophile active site attacks the C1' of nucleotide 34 to detach the guanine base from the RNA, forming a covalent enzyme-RNA intermediate. The proton acceptor active site deprotonates the incoming PreQ1, allowing a nucleophilic attack on the C1' of the ribose to form the product. After dissociation, two additional enzymatic reactions on the tRNA convert PreQ1 to queuine (Q), resulting in the hypermodified nucleoside queuosine (7-(((4,5-cis-dihydroxy-2-cyclopenten-1-yl)amino)methyl)-7-deazaguanosine). The protein is Queuine tRNA-ribosyltransferase of Serratia proteamaculans (strain 568).